A 1090-amino-acid polypeptide reads, in one-letter code: Telomerase reverse transcriptase (1090 aa).

The disordered stretch occupies residues 184-301 (GFLLRPPSRK…PLEGGPSWRS (118 aa)). Positions 190-204 (PSRKHKSFQVGKKTR) are enriched in basic residues. Basic and acidic residues-rich tracts occupy residues 218-232 (EESR…EVST) and 252-262 (HHEERRQHEAV). The span at 281–294 (KPPPETSAAPPPLE) shows a compositional bias: pro residues. The TFLY; involved in RNA binding signature appears at 316–321 (TLGFLY). 2 interaction with RNA template regions span residues 371–376 (LPLRYF) and 477–503 (WKIK…ELAY). The 325-residue stretch at 569–893 (SPAQVASLPK…CLFPWCGLLL (325 aa)) folds into the Reverse transcriptase domain. 3 residues coordinate Mg(2+): Asp-666, Asp-826, and Asp-827.

This sequence belongs to the reverse transcriptase family. Telomerase subfamily. Catalytic subunit of the telomerase holoenzyme complex composed minimally of TERT and the telomerase RNA template component (TERC). Expressed at highest levels in gonads and brain, and at lower levels in heart, spleen, kidney, gill, muscle and skin. Detected in embryonic stem cell lines before and after differentiation. Isoform F is expressed in gonads, with higher levels in testis relative to ovary, but is not detected in other tissues. Isoform B is expressed predominantly in testis. Isoform C is up-regulated in embryonic stem cell lines after differentiation.

The protein resides in the nucleus. Its subcellular location is the chromosome. It localises to the telomere. The enzyme catalyses DNA(n) + a 2'-deoxyribonucleoside 5'-triphosphate = DNA(n+1) + diphosphate. Functionally, telomerase is a ribonucleoprotein enzyme essential for the replication of chromosome termini in most eukaryotes. It elongates telomeres. It is a reverse transcriptase that adds simple sequence repeats to chromosome ends by copying a template sequence within the RNA component of the enzyme. In Oryzias latipes (Japanese rice fish), this protein is Telomerase reverse transcriptase.